The following is a 151-amino-acid chain: Deoxyuridine 5'-triphosphate nucleotidohydrolase (151 aa).

Substrate contacts are provided by residues 70-72 (RSG), Asn-83, 87-89 (LID), and Met-97.

Belongs to the dUTPase family. Requires Mg(2+) as cofactor.

The enzyme catalyses dUTP + H2O = dUMP + diphosphate + H(+). It functions in the pathway pyrimidine metabolism; dUMP biosynthesis; dUMP from dCTP (dUTP route): step 2/2. Its function is as follows. This enzyme is involved in nucleotide metabolism: it produces dUMP, the immediate precursor of thymidine nucleotides and it decreases the intracellular concentration of dUTP so that uracil cannot be incorporated into DNA. In Pseudomonas aeruginosa (strain LESB58), this protein is Deoxyuridine 5'-triphosphate nucleotidohydrolase.